A 141-amino-acid chain; its full sequence is MRHYEIIFLVHPDQSEQVGGMVERYTKLIEEDGGKIHRLEDWGRRQLAYAINNVHKAHYVMLNVECTGKALAELEDNFRYNDAVIRNLVIRRDEAVTGQSEMLKAEENRSERRERRERPEHADSAEGDDSNDSDSSDNADE.

The segment at 96–141 is disordered; the sequence is VTGQSEMLKAEENRSERRERRERPEHADSAEGDDSNDSDSSDNADE. A compositionally biased stretch (basic and acidic residues) spans 103–124; that stretch reads LKAEENRSERRERRERPEHADS. Positions 125-141 are enriched in acidic residues; it reads AEGDDSNDSDSSDNADE.

It belongs to the bacterial ribosomal protein bS6 family.

In terms of biological role, binds together with bS18 to 16S ribosomal RNA. This chain is Small ribosomal subunit protein bS6, found in Pseudomonas putida (strain ATCC 700007 / DSM 6899 / JCM 31910 / BCRC 17059 / LMG 24140 / F1).